The following is a 473-amino-acid chain: Spliceosome-associated protein CWC27 homolog (473 aa).

The residue at position 2 (S2) is an N-acetylserine. The PPIase cyclophilin-type domain maps to 11–166 (TNGKVLLKTT…NPHKIKSCEV (156 aa)). Residues 177-193 (REIKRPKKEKPEEEVKK) are compositionally biased toward basic and acidic residues. 2 disordered regions span residues 177–386 (REIK…EDQT) and 399–473 (QAIA…KERR). A coiled-coil region spans residues 206 to 230 (SFGEEAEEEEEEVNRVSQSMKGKSK). Over residues 231-241 (SSHDLLKDDPH) the composition is skewed to basic and acidic residues. The segment covering 257 to 275 (GDLDDDGEDESAEYDEYVD) has biased composition (acidic residues). 3 stretches are compositionally biased toward basic and acidic residues: residues 276–287 (GDEKNLMRERIA), 305–348 (EVEK…KRSE), and 360–372 (EYRR…EALR). Residues 307 to 378 (EKKSVSRSEE…EALRKQQSKK (72 aa)) adopt a coiled-coil conformation. Residue S347 is modified to Phosphoserine. A compositionally biased stretch (acidic residues) spans 405 to 419 (PENDIPETEVEDDEG). Basic and acidic residues-rich tracts occupy residues 426 to 438 (QFED…KDAS) and 458 to 473 (RREE…KERR).

It belongs to the cyclophilin-type PPIase family. In terms of assembly, part of the activated spliceosome B/catalytic step 1 spliceosome, one of the forms of the spliceosome which has a well-formed active site but still cannot catalyze the branching reaction and is composed at least of 52 proteins, the U2, U5 and U6 snRNAs and the pre-mRNA. Recruited during early steps of activated spliceosome B maturation, it is probably one of the first proteins released from this complex as he matures to the spliceosome C complex. Component of the minor spliceosome, which splices U12-type introns.

The protein localises to the nucleus. Its function is as follows. As part of the spliceosome, plays a role in pre-mRNA splicing. Probable inactive PPIase with no peptidyl-prolyl cis-trans isomerase activity. As a component of the minor spliceosome, involved in the splicing of U12-type introns in pre-mRNAs. The protein is Spliceosome-associated protein CWC27 homolog of Macaca fascicularis (Crab-eating macaque).